A 783-amino-acid polypeptide reads, in one-letter code: Isoamylase 1, chloroplastic (783 aa).

The transit peptide at 1–43 (MDAIKCSSSFLHHTKLNTLFSNHTFPKISAPNFKPLFRPISIS) directs the protein to the chloroplast. The Nucleophile role is filled by Asp-410. Glu-466 serves as the catalytic Proton donor.

It belongs to the glycosyl hydrolase 13 family. In terms of assembly, associates with ISA2 to form the heteromultimeric complex Iso1 required for amylopectin synthesis.

Its subcellular location is the plastid. It localises to the chloroplast. The catalysed reaction is Hydrolysis of (1-&gt;6)-alpha-D-glucosidic branch linkages in glycogen, amylopectin and their beta-limit dextrins.. It functions in the pathway glycan biosynthesis; starch biosynthesis. Involved in the trimming of pre-amylopectin chains. Accelerates the crystallization of nascent amylopectin molecules during starch synthesis. ISA1 and ISA2 work exclusively together as a multimeric holoenzyme. ISA1-ISA2 removes preferentially branches that are very close to other branches. Promotes negative gravitropic responses in shoots by facilitating starch granules (statoliths) formation in hypocotyls. The sequence is that of Isoamylase 1, chloroplastic from Arabidopsis thaliana (Mouse-ear cress).